A 522-amino-acid chain; its full sequence is 2-isopropylmalate synthase (522 aa).

One can recognise a Pyruvate carboxyltransferase domain in the interval 5-267 (VIIFDTTLRD…ETGINAKEIH (263 aa)). Mn(2+) contacts are provided by aspartate 14, histidine 202, histidine 204, and asparagine 238. The tract at residues 392-522 (QLQQLVVQSD…MHKNRELGGV (131 aa)) is regulatory domain.

It belongs to the alpha-IPM synthase/homocitrate synthase family. LeuA type 1 subfamily. As to quaternary structure, homodimer. Mn(2+) serves as cofactor.

The protein localises to the cytoplasm. It carries out the reaction 3-methyl-2-oxobutanoate + acetyl-CoA + H2O = (2S)-2-isopropylmalate + CoA + H(+). Its pathway is amino-acid biosynthesis; L-leucine biosynthesis; L-leucine from 3-methyl-2-oxobutanoate: step 1/4. Catalyzes the condensation of the acetyl group of acetyl-CoA with 3-methyl-2-oxobutanoate (2-ketoisovalerate) to form 3-carboxy-3-hydroxy-4-methylpentanoate (2-isopropylmalate). This Shewanella sp. (strain MR-7) protein is 2-isopropylmalate synthase.